Here is a 351-residue protein sequence, read N- to C-terminus: Peroxidase C1B (351 aa).

The N-terminal stretch at 1-28 (MHSPSSTSFTWILITLGCLAFYASLSDA) is a signal peptide. 4 cysteine pairs are disulfide-bonded: Cys-39-Cys-119, Cys-72-Cys-77, Cys-125-Cys-329, and Cys-205-Cys-237. N-linked (GlcNAc...) asparagine glycosylation is present at Asn-41. The Proton acceptor role is filled by His-70. Residues Asp-71, Val-74, Gly-76, Asp-78, and Ser-80 each coordinate Ca(2+). Residue Asn-85 is glycosylated (N-linked (GlcNAc...) asparagine). Pro-167 contributes to the substrate binding site. His-198 is a binding site for heme b. Thr-199 contributes to the Ca(2+) binding site. 3 N-linked (GlcNAc...) asparagine glycosylation sites follow: Asn-214, Asn-226, and Asn-242. 3 residues coordinate Ca(2+): Asp-250, Thr-253, and Asp-258. N-linked (GlcNAc...) asparagine glycosylation occurs at Asn-283.

It belongs to the peroxidase family. Classical plant (class III) peroxidase subfamily. It depends on Ca(2+) as a cofactor. Requires heme b as cofactor.

Its subcellular location is the secreted. It is found in the vacuole. It catalyses the reaction 2 a phenolic donor + H2O2 = 2 a phenolic radical donor + 2 H2O. In terms of biological role, removal of H(2)O(2), oxidation of toxic reductants, biosynthesis and degradation of lignin, suberization, auxin catabolism, response to environmental stresses such as wounding, pathogen attack and oxidative stress. These functions might be dependent on each isozyme/isoform in each plant tissue. This is Peroxidase C1B (PRXC1B) from Armoracia rusticana (Horseradish).